Here is a 396-residue protein sequence, read N- to C-terminus: L-lactate dehydrogenase (396 aa).

An FMN hydroxy acid dehydrogenase domain is found at Met1 to Gly380. Tyr24 contributes to the substrate binding site. The FMN site is built by Ser106 and Gln127. Residue Tyr129 participates in substrate binding. Thr155 contacts FMN. Arg164 serves as a coordination point for substrate. Lys251 provides a ligand contact to FMN. The Proton acceptor role is filled by His275. Arg278 is a binding site for substrate. Residue Asp306 to Arg330 coordinates FMN.

The protein belongs to the FMN-dependent alpha-hydroxy acid dehydrogenase family. FMN serves as cofactor.

It is found in the cell inner membrane. It catalyses the reaction (S)-lactate + A = pyruvate + AH2. Its function is as follows. Catalyzes the conversion of L-lactate to pyruvate. Is coupled to the respiratory chain. The sequence is that of L-lactate dehydrogenase from Salmonella enteritidis PT4 (strain P125109).